The sequence spans 400 residues: Probable glucan endo-1,6-beta-glucosidase B (400 aa).

Residues 1–17 (MIRRLAALSALSGLATA) form the signal peptide. A glycan (N-linked (GlcNAc...) asparagine) is linked at asparagine 30. Catalysis depends on glutamate 219, which acts as the Proton donor. Asparagine 272 is a glycosylation site (N-linked (GlcNAc...) asparagine). The Nucleophile role is filled by glutamate 320.

Belongs to the glycosyl hydrolase 5 (cellulase A) family.

It is found in the secreted. The enzyme catalyses Random hydrolysis of (1-&gt;6)-linkages in (1-&gt;6)-beta-D-glucans.. Its function is as follows. Beta-glucanases participate in the metabolism of beta-glucan, the main structural component of the cell wall. Acts on lutean, pustulan and 1,6-oligo-beta-D-glucosides. This is Probable glucan endo-1,6-beta-glucosidase B (exgB) from Neosartorya fischeri (strain ATCC 1020 / DSM 3700 / CBS 544.65 / FGSC A1164 / JCM 1740 / NRRL 181 / WB 181) (Aspergillus fischerianus).